Here is a 469-residue protein sequence, read N- to C-terminus: 3-isopropylmalate dehydratase large subunit (469 aa).

Residues cysteine 350, cysteine 410, and cysteine 413 each coordinate [4Fe-4S] cluster.

It belongs to the aconitase/IPM isomerase family. LeuC type 1 subfamily. In terms of assembly, heterodimer of LeuC and LeuD. It depends on [4Fe-4S] cluster as a cofactor.

It carries out the reaction (2R,3S)-3-isopropylmalate = (2S)-2-isopropylmalate. The protein operates within amino-acid biosynthesis; L-leucine biosynthesis; L-leucine from 3-methyl-2-oxobutanoate: step 2/4. In terms of biological role, catalyzes the isomerization between 2-isopropylmalate and 3-isopropylmalate, via the formation of 2-isopropylmaleate. The chain is 3-isopropylmalate dehydratase large subunit from Chelativorans sp. (strain BNC1).